A 177-amino-acid chain; its full sequence is Interleukin-10 (177 aa).

The signal sequence occupies residues 1 to 19; it reads MPSSSAVLCCLVFLAGVAA. 2 disulfides stabilise this stretch: cysteine 31–cysteine 127 and cysteine 81–cysteine 133. Residue asparagine 135 is glycosylated (N-linked (GlcNAc...) asparagine).

It belongs to the IL-10 family. As to quaternary structure, homodimer. Interacts with IL10RA and IL10RB.

The protein resides in the secreted. Its function is as follows. Major immune regulatory cytokine that acts on many cells of the immune system where it has profound anti-inflammatory functions, limiting excessive tissue disruption caused by inflammation. Mechanistically, IL10 binds to its heterotetrameric receptor comprising IL10RA and IL10RB leading to JAK1 and STAT2-mediated phosphorylation of STAT3. In turn, STAT3 translocates to the nucleus where it drives expression of anti-inflammatory mediators. Targets antigen-presenting cells (APCs) such as macrophages and monocytes and inhibits their release of pro-inflammatory cytokines including granulocyte-macrophage colony-stimulating factor /GM-CSF, granulocyte colony-stimulating factor/G-CSF, IL-1 alpha, IL-1 beta, IL-6, IL-8 and TNF-alpha. Also interferes with antigen presentation by reducing the expression of MHC-class II and co-stimulatory molecules, thereby inhibiting their ability to induce T cell activation. In addition, controls the inflammatory response of macrophages by reprogramming essential metabolic pathways including mTOR signaling. This chain is Interleukin-10 (IL10), found in Ovis aries (Sheep).